Consider the following 191-residue polypeptide: ECF RNA polymerase sigma-E factor (191 aa).

The interval 1 to 153 is binds RNAP core; it reads MSEQLTDQVL…MAITLRELDG (153 aa). The tract at residues 25–92 is sigma-70 factor domain-2; that stretch reads LVVRYQHKVA…KNYLVAQGRR (68 aa). The Polymerase core binding signature appears at 48 to 61; the sequence is DVVQESFIKAYRAL. Positions 129–180 are sigma-70 factor domain-4; that stretch reads QIVFRTIESLPEDLRMAITLRELDGLSYEEIAAIMDCPVGTVRSRIFRAREA. The segment at residues 156 to 175 is a DNA-binding region (H-T-H motif); the sequence is YEEIAAIMDCPVGTVRSRIF.

The protein belongs to the sigma-70 factor family. ECF subfamily. As to quaternary structure, interacts transiently with the RNAP catalytic core formed by RpoA, RpoB, RpoC and RpoZ (2 alpha, 1 beta, 1 beta' and 1 omega subunit) to form the RNAP holoenzyme that can initiate transcription. Interacts 1:1 with anti-sigma-E factor RseA which prevents binding to RNAP catalytic core.

The protein localises to the cytoplasm. Its activity is regulated as follows. ECF sigma-E is held in an inactive form by its cognate anti-sigma factor (RseA) until released by regulated intramembrane proteolysis (RIP). RIP occurs when an extracytoplasmic signal (periplasmic, acid or heat stress) triggers a concerted proteolytic cascade to transmit information and elicit cellular responses. In S.typhimurium there are 2 cascades, the heat shock response which depends on DegS and RseP, and acid response which depends only on RseP. The anti-sigma factor RseA is an inner membrane protein, binding sigma-E in the cytoplasm and RseB in the periplasm. RseA is first cut extracytoplasmically (site-1 protease, S1P, by DegS), then within the membrane itself (site-2 protease, S2P, by RseP), while cytoplasmic proteases (predominantly ClpX-ClpP) finish degrading the regulatory protein, liberating sigma-E. Degradation of RseA requires 2 signals to activate DegS; an outer membrane protein (OMP) signal activates DegS, while an LPS signal causes release of RseB from RseA, freeing RseA to be cleaved. OMP stress can be abrogated by overexpression of the sRNA rybB. Its function is as follows. Sigma factors are initiation factors that promote the attachment of RNA polymerase (RNAP) to specific initiation sites and are then released. Extracytoplasmic function (ECF) sigma-E controls the envelope stress response, responding to periplasmic protein stress, increased levels of periplasmic lipopolysaccharide (LPS) as well as acid stress, heat shock and oxidative stress; it controls protein processing in the extracytoplasmic compartment. This is ECF RNA polymerase sigma-E factor (rpoE) from Salmonella typhimurium (strain 14028s / SGSC 2262).